A 218-amino-acid polypeptide reads, in one-letter code: Ribosome maturation factor RimM (218 aa).

The region spanning 141-214 is the PRC barrel domain; it reads GELWWDRDLV…HIVVDPPPGL (74 aa).

The protein belongs to the RimM family. In terms of assembly, binds ribosomal protein uS19.

Its subcellular location is the cytoplasm. Its function is as follows. An accessory protein needed during the final step in the assembly of 30S ribosomal subunit, possibly for assembly of the head region. Essential for efficient processing of 16S rRNA. May be needed both before and after RbfA during the maturation of 16S rRNA. It has affinity for free ribosomal 30S subunits but not for 70S ribosomes. The sequence is that of Ribosome maturation factor RimM from Parafrankia sp. (strain EAN1pec).